Reading from the N-terminus, the 229-residue chain is MQRLKKFIAKREKGDKGKMKWNSSMDYDSPPSYQDVRRGIFPTAPLFGMEDDMMEFTPSLGIQTLKLQYKCVVNINAINPFRDFREAISAMQFWEADYSGYIGKKPFYRAIILHTARQLKTSNPGILDRGVVEYHATTQGRALVFHSLGPSPSMMFVPETFTREWNILTNKGTINVKIWLGETDTLSELEPILNPVNFRDDREMIEGAAIMGLEIKKQKDNTWLISKSH.

The short motif at 2-4 (QRL) is the dynamin binding element. Residues 30-33 (PPSY) carry the PPXY motif motif. The PTAP/PSAP motif motif lies at 42 to 45 (PTAP).

It belongs to the vesiculoviruses matrix protein family. As to quaternary structure, homomultimer. Interacts with viral nucleocapsid; this interaction contributes to the virion assembly. Interacts with the viral envelope glycoprotein; this interaction contributes to the virion assembly. Interacts with host RAE1-NUP98 complex. Interacts with host NEDD4 and TSG101. Interacts with host dynamin. Interacts with host NDUFAF4; the interaction inhibits viral propagation and is independent of interferon activation. Interacts with host GTF2H5; the interaction may inhibit host transcription. Interacts with host DRG1. Interaction with host CTDNEP1. Interaction with host ABCE1. Post-translationally, phosphorylated by host.

The protein resides in the virion. Its subcellular location is the host endomembrane system. It localises to the host nucleus membrane. It is found in the host nucleus. The protein localises to the host cytoplasm. Forms a double layer around the helical nucleocapsid, the inner matrix layer binding to the N helix and the outer matrix layer binding to the envelope glycoprotein. Plays a major role in assembly and budding of virion, by recruiting cellular partners of the ESCRT complexes that play a key role in releasing the budding particle from the host membrane. Condensates the ribonucleocapsid core during virus assembly. Inhibits the host mRNA nuclear export thereby inducing the shut off of cellular transcription and preventing the interferon signaling and the establishment of antiviral state in infected cells. This shutoff presumably inhibits interferon signaling and thus establishment of antiviral state in virus infected cells. Induces cell-rounding, cytoskeleton disorganization and apoptosis in infected cell. Inhibits host transcription, possibly through interaction with host DNA repair factor IIH/TFIIH GTF2H5 subunit. The sequence is that of Matrix protein (M) from Homo sapiens (Human).